We begin with the raw amino-acid sequence, 332 residues long: tRNA uridine(34) hydroxylase (332 aa).

Positions 123–217 constitute a Rhodanese domain; that stretch reads SDPEVLLVDT…YLEEVKQEES (95 aa). C177 functions as the Cysteine persulfide intermediate in the catalytic mechanism. The interval 302-332 is disordered; the sequence is SDVGAVIQSRRDNKENLKKSQVKLNNKKYNK. Basic and acidic residues predominate over residues 310 to 319; that stretch reads SRRDNKENLK.

It belongs to the TrhO family.

The catalysed reaction is uridine(34) in tRNA + AH2 + O2 = 5-hydroxyuridine(34) in tRNA + A + H2O. Catalyzes oxygen-dependent 5-hydroxyuridine (ho5U) modification at position 34 in tRNAs. The polypeptide is tRNA uridine(34) hydroxylase (Shewanella woodyi (strain ATCC 51908 / MS32)).